Consider the following 312-residue polypeptide: Ribosomal RNA small subunit methyltransferase H (312 aa).

S-adenosyl-L-methionine is bound by residues 35 to 37, Asp-55, Phe-79, Asp-101, and Gln-108; that span reads GGH.

Belongs to the methyltransferase superfamily. RsmH family.

It localises to the cytoplasm. The enzyme catalyses cytidine(1402) in 16S rRNA + S-adenosyl-L-methionine = N(4)-methylcytidine(1402) in 16S rRNA + S-adenosyl-L-homocysteine + H(+). Its function is as follows. Specifically methylates the N4 position of cytidine in position 1402 (C1402) of 16S rRNA. This is Ribosomal RNA small subunit methyltransferase H from Buchnera aphidicola subsp. Acyrthosiphon pisum (strain APS) (Acyrthosiphon pisum symbiotic bacterium).